A 67-amino-acid chain; its full sequence is DNA-directed RNA polymerase subunit omega (67 aa).

The protein belongs to the RNA polymerase subunit omega family. The RNAP catalytic core consists of 2 alpha, 1 beta, 1 beta' and 1 omega subunit. When a sigma factor is associated with the core the holoenzyme is formed, which can initiate transcription.

It carries out the reaction RNA(n) + a ribonucleoside 5'-triphosphate = RNA(n+1) + diphosphate. Functionally, promotes RNA polymerase assembly. Latches the N- and C-terminal regions of the beta' subunit thereby facilitating its interaction with the beta and alpha subunits. This chain is DNA-directed RNA polymerase subunit omega, found in Acidovorax ebreus (strain TPSY) (Diaphorobacter sp. (strain TPSY)).